A 231-amino-acid chain; its full sequence is GFP-like fluorescent chromoprotein FP538 (231 aa).

A Phenylalanine amide; atypical modification is found at Phe65. The 2-tetrahydro-2-pyridyl-5-imidazolinone (Lys-Gly) cross-link spans 66-68; the sequence is KYG. The residue at position 67 (Tyr67) is a 2,3-didehydrotyrosine.

It belongs to the GFP family. As to quaternary structure, homotetramer. In terms of processing, contains a chromophore consisting of modified amino acid residues. The chromophore is formed by autocatalytic backbone condensation between Xaa-N and Gly-(N+2), and oxidation of Tyr-(N+1) to didehydrotyrosine. In addition, the residue N lysine undergoes cyclization. The alpha-amino nitrogen is replaced by the epsilon-amino nitrogen, the peptide chain is broken, residue N-1 is released as an amide, and a double bond is formed between the alpha-carbon and the nitrogen so that a tetrahydropyridine ring results. Maturation of the chromophore requires nothing other than molecular oxygen. In terms of tissue distribution, tentacle and oral disk.

Pigment protein that is yellow in color. This is GFP-like fluorescent chromoprotein FP538 from Zoanthus sp. (Green polyp).